The sequence spans 399 residues: Carbamoyl phosphate synthase small chain (399 aa).

Residues 1–206 are CPSase; sequence MTQTIPSPKP…NKGYKTNNDA (206 aa). Residues serine 60, glycine 258, and glycine 260 each coordinate L-glutamine. Residues 210–398 enclose the Glutamine amidotransferase type-1 domain; it reads HIVAIDYGIK…FNLIMDYKKT (189 aa). Cysteine 287 serves as the catalytic Nucleophile. L-glutamine-binding residues include leucine 288, glutamine 291, asparagine 329, glycine 331, and phenylalanine 332. Catalysis depends on residues histidine 371 and glutamate 373.

Belongs to the CarA family. Composed of two chains; the small (or glutamine) chain promotes the hydrolysis of glutamine to ammonia, which is used by the large (or ammonia) chain to synthesize carbamoyl phosphate. Tetramer of heterodimers (alpha,beta)4.

It carries out the reaction hydrogencarbonate + L-glutamine + 2 ATP + H2O = carbamoyl phosphate + L-glutamate + 2 ADP + phosphate + 2 H(+). It catalyses the reaction L-glutamine + H2O = L-glutamate + NH4(+). It functions in the pathway amino-acid biosynthesis; L-arginine biosynthesis; carbamoyl phosphate from bicarbonate: step 1/1. The protein operates within pyrimidine metabolism; UMP biosynthesis via de novo pathway; (S)-dihydroorotate from bicarbonate: step 1/3. Its function is as follows. Small subunit of the glutamine-dependent carbamoyl phosphate synthetase (CPSase). CPSase catalyzes the formation of carbamoyl phosphate from the ammonia moiety of glutamine, carbonate, and phosphate donated by ATP, constituting the first step of 2 biosynthetic pathways, one leading to arginine and/or urea and the other to pyrimidine nucleotides. The small subunit (glutamine amidotransferase) binds and cleaves glutamine to supply the large subunit with the substrate ammonia. In Bartonella henselae (strain ATCC 49882 / DSM 28221 / CCUG 30454 / Houston 1) (Rochalimaea henselae), this protein is Carbamoyl phosphate synthase small chain.